Here is a 471-residue protein sequence, read N- to C-terminus: Fructokinase-like 1, chloroplastic (471 aa).

A chloroplast-targeting transit peptide spans 1–38 (MASLLIFPHLHHFDSSLDRREVLVVRHSQASRRFLTPK). The tract at residues 36–85 (TPKASINGSGITNGAAAETTSKPSRKGRKKKQTSTVIEKDNTETDPELNP) is disordered. A compositionally biased stretch (polar residues) spans 39 to 57 (ASINGSGITNGAAAETTSK). Over residues 58–67 (PSRKGRKKKQ) the composition is skewed to basic residues.

This sequence belongs to the carbohydrate kinase PfkB family. As to quaternary structure, interacts with CITRX/TRXz. Interacts with PTAC7. Self-interacts. Binds to FLN2. Associates with the plastid-encoded RNA polymerase (PEP) complex.

It localises to the plastid. The protein resides in the chloroplast. Required for proper chloroplast development, most likely through regulating plastid-encoded polymerase (PEP) dependent chloroplast transcription. Acts as a component of the transcriptionally active plastid chromosome that is required for plastid gene expression. This chain is Fructokinase-like 1, chloroplastic, found in Arabidopsis thaliana (Mouse-ear cress).